The following is a 777-amino-acid chain: Zygote defective protein 12 (777 aa).

Composition is skewed to basic and acidic residues over residues 1 to 10 and 18 to 36; these read MLDLTNKESE and KYED…PFKE. Residues 1 to 36 are disordered; sequence MLDLTNKESESSDNGNSKYEDSIDGREVGTSKPFKE. Positions 1–234 are interaction with dli-1; sequence MLDLTNKESE…ESSGKLNGNG (234 aa). In terms of domain architecture, Calponin-homology (CH) spans 44 to 169; the sequence is QADLADMAVW…VTLAHIGKNA (126 aa). Disordered stretches follow at residues 217–242 and 273–292; these read QSEL…RSNA and SFET…DISI. Residues 218 to 235 show a composition bias toward low complexity; that stretch reads SELNSLSESSGKLNGNGS. Coiled-coil stretches lie at residues 236 to 399 and 425 to 688; these read SERR…HHVK and NTEL…QENR. Polar residues predominate over residues 273–288; it reads SFETAQHDMSSNSESG. A helical membrane pass occupies residues 747-767; it reads AMASILVLGFLVFIAWMFINI. The tract at residues 749–777 is interaction with unc-84; the sequence is ASILVLGFLVFIAWMFININSALNAPPNA.

The protein belongs to the hook family. Homodimer. Interacts with the dynein subunit dli-1 via its N-terminus. May interact with microtubules. Interacts with sut-2. Interacts (via C-terminus) with unc-84 (via C-terminus); the interaction is direct. Expressed in the syncytial gonad, oocytes, and in all cells during the development of the early embryo.

It localises to the nucleus membrane. The protein resides in the cytoplasm. Its subcellular location is the cytoskeleton. It is found in the microtubule organizing center. The protein localises to the centrosome. Functionally, cytoskeletal linker protein, which is essential for attachment of the centrosome to the nucleus. Required for dynein localization to the nuclear envelope. Forms a LINC (LInker of Nucleoskeleton and Cytoskeleton) complex together with unc-84, that may be involved in DNA damage repair. The protein is Zygote defective protein 12 of Caenorhabditis elegans.